A 253-amino-acid chain; its full sequence is MNRVILFHFHFFKNAGSAVDYILEKNFGDRFVKKEFKLWPYYENIKEVIKWIENESDAVAFSSHTARLFDSTLLERRGIKIIPIIFVRHPIIRIHSAYHYERKQVDIFRPGPVIARNTDFKGYVEIRLAIPRQEFNVSNFHVFRLADMLHGEKNMKPLEKALIALKRLPFIGLVEEFEKSMTKLEETVREYFPEFKASVIRTNVQFSPDMPLEERLKIIKNEVGKDFYKKLMEINEEDMVLWEKVVDMYKEGF.

The first 15 residues, 1–15 (MNRVILFHFHFFKNA), serve as a signal peptide directing secretion.

This is an uncharacterized protein from Archaeoglobus fulgidus (strain ATCC 49558 / DSM 4304 / JCM 9628 / NBRC 100126 / VC-16).